A 73-amino-acid polypeptide reads, in one-letter code: UPF0235 protein LA_1736 (73 aa).

This sequence belongs to the UPF0235 family.

The protein is UPF0235 protein LA_1736 of Leptospira interrogans serogroup Icterohaemorrhagiae serovar Lai (strain 56601).